Here is a 195-residue protein sequence, read N- to C-terminus: Auxin-responsive protein IAA14 (195 aa).

Disordered regions lie at residues 1–61 and 85–107; these read MAAE…SPAS and STAAAAKGKGGGETDQGRKNKGG. The EAR-like (transcriptional repression) motif lies at 10-14; sequence LRLGL. Residues 108–191 form the PB1 domain; that stretch reads GLYVKVSMDG…SCKKLRIMRG (84 aa).

This sequence belongs to the Aux/IAA family. In terms of assembly, homodimers and heterodimers. As to expression, highly expressed in flowers. Expressed in etiolated seedlings.

Its subcellular location is the nucleus. Functionally, aux/IAA proteins are short-lived transcriptional factors that function as repressors of early auxin response genes at low auxin concentrations. The chain is Auxin-responsive protein IAA14 (IAA14) from Oryza sativa subsp. japonica (Rice).